A 283-amino-acid chain; its full sequence is Pantothenate synthetase (283 aa).

26–33 (MGNLHEGH) lines the ATP pocket. His33 (proton donor) is an active-site residue. Gln57 contributes to the (R)-pantoate binding site. Gln57 serves as a coordination point for beta-alanine. Residue 148–151 (GKKD) participates in ATP binding. Position 154 (Gln154) interacts with (R)-pantoate. Residue 185 to 188 (LSSR) coordinates ATP.

This sequence belongs to the pantothenate synthetase family. As to quaternary structure, homodimer.

The protein localises to the cytoplasm. The catalysed reaction is (R)-pantoate + beta-alanine + ATP = (R)-pantothenate + AMP + diphosphate + H(+). The protein operates within cofactor biosynthesis; (R)-pantothenate biosynthesis; (R)-pantothenate from (R)-pantoate and beta-alanine: step 1/1. Its function is as follows. Catalyzes the condensation of pantoate with beta-alanine in an ATP-dependent reaction via a pantoyl-adenylate intermediate. This is Pantothenate synthetase from Polaromonas naphthalenivorans (strain CJ2).